Reading from the N-terminus, the 188-residue chain is Molybdopterin synthase catalytic subunit (188 aa).

A compositionally biased stretch (polar residues) spans 1 to 10; the sequence is MSTSETSSYT. The disordered stretch occupies residues 1–21; the sequence is MSTSETSSYTPDIPSEPVTKT. Substrate is bound by residues 123–124, lysine 139, and 146–148; these read HR and KLE.

It belongs to the MoaE family. MOCS2B subfamily. In terms of assembly, heterotetramer; composed of 2 small (MOCS2A) and 2 large (MOCS2B) subunits.

It localises to the cytoplasm. The enzyme catalyses 2 [molybdopterin-synthase sulfur-carrier protein]-C-terminal-Gly-aminoethanethioate + cyclic pyranopterin phosphate + H2O = molybdopterin + 2 [molybdopterin-synthase sulfur-carrier protein]-C-terminal Gly-Gly + 2 H(+). Its pathway is cofactor biosynthesis; molybdopterin biosynthesis. Catalytic subunit of the molybdopterin synthase complex, a complex that catalyzes the conversion of precursor Z into molybdopterin. Acts by mediating the incorporation of 2 sulfur atoms from thiocarboxylated MOCS2A into precursor Z to generate a dithiolene group. The chain is Molybdopterin synthase catalytic subunit from Phaeosphaeria nodorum (strain SN15 / ATCC MYA-4574 / FGSC 10173) (Glume blotch fungus).